A 39-amino-acid chain; its full sequence is Neuropeptide F (39 aa).

Phenylalanine amide is present on F39.

The protein belongs to the NPY family. As to expression, neuronal somata and fibers.

It localises to the secreted. Its function is as follows. May have an important physiological role in neuroregulation. The sequence is that of Neuropeptide F from Cornu aspersum (Brown garden snail).